The sequence spans 317 residues: Ceramide reductase (317 aa).

Residues 1 to 27 (MATDARGVVAITGATGFLGRHLVRALA) form the signal peptide.

The protein belongs to the NAD(P)-dependent epimerase/dehydratase family.

It localises to the periplasm. The enzyme catalyses N-acyl-3-oxosphinganine + NADH + H(+) = an N-acylsphinganine + NAD(+). It participates in lipid metabolism; sphingolipid metabolism. Involved in de novo bacterial ceramide synthesis. Catalyzes the reduction of bacterial oxidized ceramides to bacterial dihydroceramides. The sequence is that of Ceramide reductase from Caulobacter vibrioides (strain NA1000 / CB15N) (Caulobacter crescentus).